The primary structure comprises 466 residues: Neuraminidase (466 aa).

The Intravirion portion of the chain corresponds to 1 to 8; sequence MLPSTVQT. The helical transmembrane segment at 9 to 31 threads the bilayer; that stretch reads LTLLLTSGGVLLSLYVSASLSYL. The tract at residues 13-35 is involved in apical transport and lipid raft association; sequence LTSGGVLLSLYVSASLSYLLYSD. The Virion surface portion of the chain corresponds to 32–466; it reads LYSDVLLKFS…DTVTGVDMAL (435 aa). The tract at residues 38-86 is hypervariable stalk region; the sequence is LKFSSTKTTAPTMSLECTNASNAQTVNHSATKEMTFPPPEPEWTYPRLS. 2 N-linked (GlcNAc...) asparagine; by host glycosylation sites follow: Asn-56 and Asn-64. Disulfide bonds link Cys-87-Cys-420, Cys-122-Cys-127, Cys-182-Cys-229, Cys-231-Cys-236, Cys-277-Cys-291, Cys-279-Cys-289, Cys-318-Cys-337, and Cys-424-Cys-447. The tract at residues 89–466 is head of neuraminidase; it reads GSTFQKALLI…DTVTGVDMAL (378 aa). A substrate-binding site is contributed by Arg-116. Asn-144 carries N-linked (GlcNAc...) asparagine; by host glycosylation. The active-site Proton donor/acceptor is the Asp-149. Substrate is bound at residue Arg-150. 275 to 276 is a substrate binding site; the sequence is EE. N-linked (GlcNAc...) asparagine; by host glycosylation is present at Asn-284. Residue Arg-292 coordinates substrate. Residues Asp-293, Thr-297, Asp-324, and Gly-346 each coordinate Ca(2+). Arg-374 provides a ligand contact to substrate. Tyr-409 functions as the Nucleophile in the catalytic mechanism.

The protein belongs to the glycosyl hydrolase 34 family. As to quaternary structure, homotetramer. Ca(2+) is required as a cofactor. In terms of processing, N-glycosylated.

The protein resides in the virion membrane. Its subcellular location is the host apical cell membrane. The catalysed reaction is Hydrolysis of alpha-(2-&gt;3)-, alpha-(2-&gt;6)-, alpha-(2-&gt;8)- glycosidic linkages of terminal sialic acid residues in oligosaccharides, glycoproteins, glycolipids, colominic acid and synthetic substrates.. Its activity is regulated as follows. Inhibited by the neuraminidase inhibitors zanamivir (Relenza) and oseltamivir (Tamiflu). These drugs interfere with the release of progeny virus from infected cells and are effective against all influenza strains. Resistance to neuraminidase inhibitors is quite rare. Catalyzes the removal of terminal sialic acid residues from viral and cellular glycoconjugates. Cleaves off the terminal sialic acids on the glycosylated HA during virus budding to facilitate virus release. Additionally helps virus spread through the circulation by further removing sialic acids from the cell surface. These cleavages prevent self-aggregation and ensure the efficient spread of the progeny virus from cell to cell. Otherwise, infection would be limited to one round of replication. Described as a receptor-destroying enzyme because it cleaves a terminal sialic acid from the cellular receptors. May facilitate viral invasion of the upper airways by cleaving the sialic acid moieties on the mucin of the airway epithelial cells. Likely to plays a role in the budding process through its association with lipid rafts during intracellular transport. May additionally display a raft-association independent effect on budding. Plays a role in the determination of host range restriction on replication and virulence. Sialidase activity in late endosome/lysosome traffic seems to enhance virus replication. In Influenza B virus (strain B/Lee/1940), this protein is Neuraminidase.